Here is a 555-residue protein sequence, read N- to C-terminus: Formate--tetrahydrofolate ligase (555 aa).

65–72 provides a ligand contact to ATP; that stretch reads TPAGEGKT.

The protein belongs to the formate--tetrahydrofolate ligase family.

The catalysed reaction is (6S)-5,6,7,8-tetrahydrofolate + formate + ATP = (6R)-10-formyltetrahydrofolate + ADP + phosphate. Its pathway is one-carbon metabolism; tetrahydrofolate interconversion. This Thermoanaerobacter pseudethanolicus (strain ATCC 33223 / 39E) (Clostridium thermohydrosulfuricum) protein is Formate--tetrahydrofolate ligase.